A 5400-amino-acid polypeptide reads, in one-letter code: Midasin (5400 aa).

6 AAA-ATPase protomer regions span residues methionine 345 to proline 571, leucine 656 to alanine 986, serine 1050 to valine 1308, serine 1347 to alanine 1652, valine 1769 to isoleucine 2023, and isoleucine 2074 to proline 2347. ATP contacts are provided by residues glycine 360–serine 367, glycine 674–threonine 681, glycine 1079–threonine 1086, glycine 1369–threonine 1376, glycine 1786–threonine 1793, and glycine 2095–threonine 2102. Residues isoleucine 2435 to aspartate 4569 form a linker region. 3 coiled-coil regions span residues leucine 2896–aspartate 2916, alanine 3233–asparagine 3253, and methionine 3896–leucine 3916. 3 disordered regions span residues glutamate 4540 to asparagine 4890, threonine 4905 to asparagine 4929, and glutamine 4990 to serine 5069. A compositionally biased stretch (basic and acidic residues) spans glutamine 4576–serine 4612. Residues valine 4613–leucine 4631 are compositionally biased toward acidic residues. 2 stretches are compositionally biased toward basic and acidic residues: residues aspartate 4641 to lysine 4652 and methionine 4661 to glycine 4687. 2 stretches are compositionally biased toward acidic residues: residues valine 4688–asparagine 4698 and glycine 4706–asparagine 4721. A compositionally biased stretch (basic and acidic residues) spans leucine 4722 to alanine 4732. Over residues valine 4740–glutamate 4750 the composition is skewed to acidic residues. Positions methionine 4751–alanine 4762 are enriched in basic and acidic residues. The segment covering glycine 4779–alanine 4798 has biased composition (acidic residues). Residues glutamate 4799–proline 4810 are compositionally biased toward basic and acidic residues. Over residues glycine 4811–proline 4822 the composition is skewed to acidic residues. The segment covering isoleucine 4823–methionine 4834 has biased composition (basic and acidic residues). 4 stretches are compositionally biased toward polar residues: residues arginine 4839–glycine 4855, threonine 4864–aspartate 4874, proline 4916–valine 4928, and serine 5030–glutamate 5040. Positions methionine 5157–isoleucine 5164 match the Nuclear localization signal motif. The VWFA domain occupies glutamine 5186–valine 5387. Positions valine 5271–glutamine 5291 form a coiled coil.

The protein belongs to the midasin family. Associates with pre-60S ribosomes in the nucleoplasm. As to expression, constitutively and ubiquitously expressed. Mostly observed in the shoot apex and root tip, and, to a lower extent, in mature seeds, seedling (excluding the hypocotyl), roots, stems, leaves and flowers.

Its subcellular location is the nucleus. The protein localises to the nucleolus. It is found in the nucleoplasm. Nuclear chaperone required for maturation and nuclear export of pre-60S ribosome subunits. Functions at successive maturation steps to remove ribosomal factors at critical transition points, first driving the exit of early pre-60S particles from the nucleolus and then driving late pre-60S particles from the nucleus. Required for female gametophyte development. Involved in the expression regulation of genes related to plant growth and development. This chain is Midasin, found in Arabidopsis thaliana (Mouse-ear cress).